A 338-amino-acid polypeptide reads, in one-letter code: uncharacterized protein (338 aa).

The interval 1-20 (MYNNNQNHHNNDNNMNKDEP) is disordered. Residues 9–20 (HNNDNNMNKDEP) are compositionally biased toward basic and acidic residues. N-linked (GlcNAc...) asparagine glycosylation is found at Asn-37, Asn-83, Asn-97, Asn-105, Asn-114, and Asn-122. The disordered stretch occupies residues 55 to 92 (VNSGNNNNNNNNNNNNNNNNNNNNNNNNNDSIVINMDT). Over residues 59–92 (NNNNNNNNNNNNNNNNNNNNNNNNNDSIVINMDT) the composition is skewed to low complexity. Helical transmembrane passes span 148-168 (YKKFISSLSYITFIGAAIVLI), 178-198 (FHAYQSFYISMGVIGFQFLLI), and 202-222 (ILSIILWSLYLLFTIFMFLKV). N-linked (GlcNAc...) asparagine glycosylation is found at Asn-229, Asn-240, Asn-286, Asn-302, Asn-317, and Asn-322. Disordered stretches follow at residues 279 to 303 (SNLNRNNNNSNNVNNNGHQRINSNS) and 316 to 338 (LNSSGSNSSIYSDVQNDIGTNEE). The segment covering 280 to 294 (NLNRNNNNSNNVNNN) has biased composition (low complexity). Low complexity predominate over residues 316–327 (LNSSGSNSSIYS). The segment covering 328 to 338 (DVQNDIGTNEE) has biased composition (polar residues).

The protein localises to the membrane. This is an uncharacterized protein from Dictyostelium discoideum (Social amoeba).